The sequence spans 599 residues: Interleukin-18 receptor accessory protein (599 aa).

The N-terminal stretch at 1 to 19 is a signal peptide; sequence MLCLGWIFLWLVAGERIKG. The Extracellular portion of the chain corresponds to 20 to 356; sequence FNISGCSTKK…TQSVQLKEKR (337 aa). 3 N-linked (GlcNAc...) asparagine glycosylation sites follow: Asn-21, Asn-119, and Asn-152. A disulfide bridge connects residues Cys-46 and Cys-126. Ig-like C2-type domains are found at residues 149 to 235 and 251 to 353; these read PQTN…WTVR and PDIL…VQLK. Cystine bridges form between Cys-155/Cys-180, Cys-175/Cys-221, Cys-180/Cys-221, and Cys-273/Cys-337. Asn-345 carries N-linked (GlcNAc...) asparagine glycosylation. The chain crosses the membrane as a helical span at residues 357–377; sequence GVVLLYILLGTIGTLVAVLAA. Topologically, residues 378-599 are cytoplasmic; sequence SALLYRHWIE…TGRSSQPKEW (222 aa). One can recognise a TIR domain in the interval 406-559; the sequence is KDFDAFVSYA…RFWAKMRYHM (154 aa). The active site involves Glu-493.

Belongs to the interleukin-1 receptor family. Forms a ternary complex with IL18 and IL18R1. Within this complex, IL18R1 is involved in ligand-binding and IL18RAP in signaling leading to NF-kappa-B and JNK activation. Post-translationally, N-glycosylated. In terms of tissue distribution, detected in adrenal gland, bone marrow, brain, fetal brain, fetal liver, heart, kidney, lung, liver, peripheral blood leukocytes, placenta, prostate, salivary gland, skeletal muscle, spinal cord, testis, thymus, thyroid, trachea and uterus. Strongly expressed in peripheral blood leukocytes and spleen and, to a lesser extent, in colon. Specifically coexpressed with IL18R1 in T-helper 1 (Th1)cells.

It is found in the cell membrane. It catalyses the reaction NAD(+) + H2O = ADP-D-ribose + nicotinamide + H(+). Within the IL18 receptor complex, does not mediate IL18-binding, but involved in IL18-dependent signal transduction, leading to NF-kappa-B and JNK activation. May play a role in IL18-mediated IFNG synthesis from T-helper 1 (Th1) cells. This is Interleukin-18 receptor accessory protein from Homo sapiens (Human).